A 157-amino-acid chain; its full sequence is MIKLKNFAELNSQEIKLIFKWRNHPDISQFMKTKHIDFEEHLRFIRNLHQDSNKKYFLVFQDEQIIGVIDFVNITTKSCEFGLYAIPDLKGVGQVLMNEIKKYAFEILKVDTLKAYVFKDNHKALKLYQQNHFTIYDEDKDFYYVCLKQSHCKALPS.

Positions 5–152 (KNFAELNSQE…YYVCLKQSHC (148 aa)) constitute an N-acetyltransferase domain.

In terms of biological role, catalyzes the third step in the biosynthesis of pseudaminic acid, a sialic-acid-like sugar that is used to modify flagellin. Mediates N-4 acetylation of UDP-4-amino-4,6-dideoxy-beta-L-AltNAc to form UDP-2,4-diacetamido-2,4,6-trideoxy-beta-L-altropyranose. This Campylobacter jejuni subsp. jejuni serotype O:2 (strain ATCC 700819 / NCTC 11168) protein is Acetyltransferase PseH (pseH).